We begin with the raw amino-acid sequence, 444 residues long: Tol-Pal system protein TolB (444 aa).

An N-terminal signal peptide occupies residues 1–18; sequence MKNIIYCILLLFSFNSYA.

It belongs to the TolB family. As to quaternary structure, the Tol-Pal system is composed of five core proteins: the inner membrane proteins TolA, TolQ and TolR, the periplasmic protein TolB and the outer membrane protein Pal. They form a network linking the inner and outer membranes and the peptidoglycan layer.

It localises to the periplasm. Part of the Tol-Pal system, which plays a role in outer membrane invagination during cell division and is important for maintaining outer membrane integrity. This is Tol-Pal system protein TolB from Rickettsia bellii (strain OSU 85-389).